Reading from the N-terminus, the 475-residue chain is Ribulose bisphosphate carboxylase large chain (475 aa).

Residues 1-2 constitute a propeptide that is removed on maturation; sequence MV. Pro-3 is modified (N-acetylproline). Lys-14 bears the N6,N6,N6-trimethyllysine mark. Residues Asn-123 and Thr-173 each contribute to the substrate site. Lys-175 (proton acceptor) is an active-site residue. Lys-177 is a binding site for substrate. Residues Lys-201, Asp-203, and Glu-204 each coordinate Mg(2+). The residue at position 201 (Lys-201) is an N6-carboxylysine. His-294 acts as the Proton acceptor in catalysis. Substrate is bound by residues Arg-295, His-327, and Ser-379.

This sequence belongs to the RuBisCO large chain family. Type I subfamily. In terms of assembly, heterohexadecamer of 8 large chains and 8 small chains. Requires Mg(2+) as cofactor.

Its subcellular location is the plastid. It localises to the chloroplast. The catalysed reaction is 2 (2R)-3-phosphoglycerate + 2 H(+) = D-ribulose 1,5-bisphosphate + CO2 + H2O. The enzyme catalyses D-ribulose 1,5-bisphosphate + O2 = 2-phosphoglycolate + (2R)-3-phosphoglycerate + 2 H(+). Functionally, ruBisCO catalyzes two reactions: the carboxylation of D-ribulose 1,5-bisphosphate, the primary event in carbon dioxide fixation, as well as the oxidative fragmentation of the pentose substrate in the photorespiration process. Both reactions occur simultaneously and in competition at the same active site. This chain is Ribulose bisphosphate carboxylase large chain, found in Chlamydomonas moewusii (Chlamydomonas eugametos).